Here is a 117-residue protein sequence, read N- to C-terminus: Large ribosomal subunit protein uL18 (117 aa).

The protein belongs to the universal ribosomal protein uL18 family. Part of the 50S ribosomal subunit; part of the 5S rRNA/L5/L18/L25 subcomplex. Contacts the 5S and 23S rRNAs.

Functionally, this is one of the proteins that bind and probably mediate the attachment of the 5S RNA into the large ribosomal subunit, where it forms part of the central protuberance. In Colwellia psychrerythraea (strain 34H / ATCC BAA-681) (Vibrio psychroerythus), this protein is Large ribosomal subunit protein uL18.